A 438-amino-acid polypeptide reads, in one-letter code: Trigger factor (438 aa).

The region spanning aspartate 160–proline 245 is the PPIase FKBP-type domain.

Belongs to the FKBP-type PPIase family. Tig subfamily.

The protein localises to the cytoplasm. It catalyses the reaction [protein]-peptidylproline (omega=180) = [protein]-peptidylproline (omega=0). Involved in protein export. Acts as a chaperone by maintaining the newly synthesized protein in an open conformation. Functions as a peptidyl-prolyl cis-trans isomerase. The polypeptide is Trigger factor (Francisella tularensis subsp. mediasiatica (strain FSC147)).